The sequence spans 107 residues: uncharacterized protein (107 aa).

Positions 1–20 are cleaved as a signal peptide; that stretch reads MYIKGRLIFFFVVLVIALCS.

This is an uncharacterized protein from Listeria monocytogenes serovar 1/2a (strain ATCC BAA-679 / EGD-e).